The primary structure comprises 172 residues: Large ribosomal subunit protein uL10 (172 aa).

Belongs to the universal ribosomal protein uL10 family. In terms of assembly, part of the ribosomal stalk of the 50S ribosomal subunit. The N-terminus interacts with L11 and the large rRNA to form the base of the stalk. The C-terminus forms an elongated spine to which L12 dimers bind in a sequential fashion forming a multimeric L10(L12)X complex.

Its function is as follows. Forms part of the ribosomal stalk, playing a central role in the interaction of the ribosome with GTP-bound translation factors. This Rhodopseudomonas palustris (strain TIE-1) protein is Large ribosomal subunit protein uL10.